Here is an 847-residue protein sequence, read N- to C-terminus: Vacuolar membrane protease (847 aa).

The Cytoplasmic portion of the chain corresponds to 1 to 17; that stretch reads MQFGKSLLKHVYTRTFK. Residues 18 to 38 form a helical membrane-spanning segment; the sequence is SSLTCSIFAFTLLMIFFVLDW. The Vacuolar segment spans residues 39 to 348; that stretch reads KRMNVYPRLD…GSYWQINLNL (310 aa). Residues His-146 and Asp-158 each contribute to the Zn(2+) site. Glu-190 acts as the Proton acceptor in catalysis. Glu-191 lines the Zn(2+) pocket. An N-linked (GlcNAc...) asparagine glycan is attached at Asn-208. Glu-216 is a Zn(2+) binding site. Asn-274 is a glycosylation site (N-linked (GlcNAc...) asparagine). His-291 is a Zn(2+) binding site. The chain crosses the membrane as a helical span at residues 349 to 369; sequence HLFLNVVFLIACPAILFMCLF. Topologically, residues 370-381 are cytoplasmic; sequence RFPSLYAQLKKP. A helical membrane pass occupies residues 382–402; it reads CYLICFTLSSLFVLIFDYVVV. The Vacuolar segment spans residues 403–415; it reads QSLTKLNPYVIHS. The chain crosses the membrane as a helical span at residues 416–436; it reads SPDAVLAFFFLTNLLGLVYSF. At 437-454 the chain is on the cytoplasmic side; that stretch reads RYVATHSRMSNEELSCIE. A helical membrane pass occupies residues 455-475; that stretch reads IVLIWYVSMFWYISLLIATLT. At 476–482 the chain is on the vacuolar side; it reads SIVRGLG. The helical transmembrane segment at 483–503 threads the bilayer; sequence SLYFVNFGFFCSFFCCILTLI. At 504–560 the chain is on the cytoplasmic side; it reads RVRYFVDRMVTINRPANPEQMPLVQSTSGNAYGTSRYPQHRLKAVVSKSASVKLNDN. Residues 561 to 581 form a helical membrane-spanning segment; that stretch reads LWSVLFFSCLVPLPLFTCYNL. Over 582-605 the chain is Vacuolar; sequence LSEVFIPAVHQSLIDGPYSNTCYK. Residues 606–626 traverse the membrane as a helical segment; the sequence is FAVILVFMAIINSSPFVFRAL. At 627 to 630 the chain is on the cytoplasmic side; sequence SKKS. The helical transmembrane segment at 631–651 threads the bilayer; sequence SAILLMLWVSLLFNILRAEPF. The Vacuolar portion of the chain corresponds to 652–847; sequence NEKAPIKFRV…LLKMSKTHVM (196 aa). 4 N-linked (GlcNAc...) asparagine glycosylation sites follow: Asn-726, Asn-734, Asn-800, and Asn-834.

This sequence belongs to the peptidase M28 family. Requires Zn(2+) as cofactor.

Its subcellular location is the vacuole membrane. In terms of biological role, may be involved in vacuolar sorting and osmoregulation. The sequence is that of Vacuolar membrane protease from Schizosaccharomyces japonicus (strain yFS275 / FY16936) (Fission yeast).